The primary structure comprises 960 residues: Serine/threonine-protein kinase atg1 (960 aa).

The Protein kinase domain maps to 22-327; sequence YTRLDEIGRG…FPEFFSNNVI (306 aa). ATP-binding positions include 28–36 and Lys51; that span reads IGRGSFATV. Asp165 serves as the catalytic Proton acceptor. Disordered regions lie at residues 333–467, 503–538, 550–571, 673–694, 789–815, and 926–960; these read GLLA…RAQE, PRLQGGLSRPGQTGAGSRRTTTQGLPTVSPSSPHAN, ARADSTHQRQHSYERRYGQSPT, SASTDPSARPMDTNVEPDSADS, RLPPDHPSHPDNHSISSTAGSSSTADV, and AKRSSAPTPTAGSAGKTPTSNISPVTYATGVTPPR. Polar residues-rich tracts occupy residues 376-388 and 520-536; these read PVTTHPKSGTPPT and RRTTTQGLPTVSPSSPH. Residues 550–566 are compositionally biased toward basic and acidic residues; sequence ARADSTHQRQHSYERRY. Residues 789-800 show a composition bias toward basic and acidic residues; the sequence is RLPPDHPSHPDN. Low complexity predominate over residues 801-815; the sequence is HSISSTAGSSSTADV. Polar residues predominate over residues 930 to 951; that stretch reads SAPTPTAGSAGKTPTSNISPVT.

This sequence belongs to the protein kinase superfamily. Ser/Thr protein kinase family. APG1/unc-51/ULK1 subfamily. In terms of assembly, homodimer. Forms a ternary complex with ATG13 and ATG17.

It localises to the cytoplasm. Its subcellular location is the preautophagosomal structure membrane. It catalyses the reaction L-seryl-[protein] + ATP = O-phospho-L-seryl-[protein] + ADP + H(+). The enzyme catalyses L-threonyl-[protein] + ATP = O-phospho-L-threonyl-[protein] + ADP + H(+). Its function is as follows. Serine/threonine protein kinase involved in the cytoplasm to vacuole transport (Cvt) and found to be essential in autophagy, where it is required for the formation of autophagosomes. Involved in the clearance of protein aggregates which cannot be efficiently cleared by the proteasome. Required for selective autophagic degradation of the nucleus (nucleophagy) as well as for mitophagy which contributes to regulate mitochondrial quantity and quality by eliminating the mitochondria to a basal level to fulfill cellular energy requirements and preventing excess ROS production. Also involved in endoplasmic reticulum-specific autophagic process, in selective removal of ER-associated degradation (ERAD) substrates. Plays a key role in ATG9 and ATG23 cycling through the pre-autophagosomal structure and is necessary to promote ATG18 binding to ATG9 through phosphorylation of ATG9. Catalyzes phosphorylation of ATG4, decreasing the interaction between ATG4 and ATG8 and impairing deconjugation of PE-conjugated forms of ATG8. This chain is Serine/threonine-protein kinase atg1, found in Penicillium rubens (strain ATCC 28089 / DSM 1075 / NRRL 1951 / Wisconsin 54-1255) (Penicillium chrysogenum).